The sequence spans 199 residues: Thymidylate kinase (199 aa).

7 to 14 is an ATP binding site; that stretch reads GIDGSGKT.

This sequence belongs to the thymidylate kinase family.

It carries out the reaction dTMP + ATP = dTDP + ADP. Functionally, phosphorylation of dTMP to form dTDP in both de novo and salvage pathways of dTTP synthesis. In Tropheryma whipplei (strain Twist) (Whipple's bacillus), this protein is Thymidylate kinase.